The following is a 171-amino-acid chain: Large ribosomal subunit protein bL9 (171 aa).

It belongs to the bacterial ribosomal protein bL9 family.

Its function is as follows. Binds to the 23S rRNA. The chain is Large ribosomal subunit protein bL9 from Rickettsia rickettsii (strain Iowa).